A 143-amino-acid polypeptide reads, in one-letter code: UPF0201 protein Pisl_1658 (143 aa).

It belongs to the UPF0201 family.

This chain is UPF0201 protein Pisl_1658, found in Pyrobaculum islandicum (strain DSM 4184 / JCM 9189 / GEO3).